The primary structure comprises 482 residues: Ribulose bisphosphate carboxylase large chain (482 aa).

Residues 1–2 (MS) constitute a propeptide that is removed on maturation. Proline 3 bears the N-acetylproline mark. Lysine 14 carries the N6,N6,N6-trimethyllysine modification. Substrate contacts are provided by asparagine 123 and threonine 173. Lysine 175 (proton acceptor) is an active-site residue. Lysine 177 contributes to the substrate binding site. The Mg(2+) site is built by lysine 201, aspartate 203, and glutamate 204. Lysine 201 carries the post-translational modification N6-carboxylysine. The active-site Proton acceptor is the histidine 294. Substrate-binding residues include arginine 295, histidine 327, and serine 379.

This sequence belongs to the RuBisCO large chain family. Type I subfamily. As to quaternary structure, heterohexadecamer of 8 large chains and 8 small chains; disulfide-linked. The disulfide link is formed within the large subunit homodimers. It depends on Mg(2+) as a cofactor. In terms of processing, the disulfide bond which can form in the large chain dimeric partners within the hexadecamer appears to be associated with oxidative stress and protein turnover.

The protein localises to the plastid. The protein resides in the chloroplast. It catalyses the reaction 2 (2R)-3-phosphoglycerate + 2 H(+) = D-ribulose 1,5-bisphosphate + CO2 + H2O. The catalysed reaction is D-ribulose 1,5-bisphosphate + O2 = 2-phosphoglycolate + (2R)-3-phosphoglycerate + 2 H(+). In terms of biological role, ruBisCO catalyzes two reactions: the carboxylation of D-ribulose 1,5-bisphosphate, the primary event in carbon dioxide fixation, as well as the oxidative fragmentation of the pentose substrate in the photorespiration process. Both reactions occur simultaneously and in competition at the same active site. The sequence is that of Ribulose bisphosphate carboxylase large chain from Phytolacca americana (American pokeweed).